The sequence spans 502 residues: Glutamate--tRNA ligase (502 aa).

The 'HIGH' region signature appears at 9–19; it reads PSPTGFPHVGT. The 'KMSKS' region motif lies at 250–254; the sequence is KLSKR. Position 253 (lysine 253) interacts with ATP.

The protein belongs to the class-I aminoacyl-tRNA synthetase family. Glutamate--tRNA ligase type 1 subfamily. In terms of assembly, monomer.

The protein resides in the cytoplasm. The enzyme catalyses tRNA(Glu) + L-glutamate + ATP = L-glutamyl-tRNA(Glu) + AMP + diphosphate. Its function is as follows. Catalyzes the attachment of glutamate to tRNA(Glu) in a two-step reaction: glutamate is first activated by ATP to form Glu-AMP and then transferred to the acceptor end of tRNA(Glu). The polypeptide is Glutamate--tRNA ligase (Acinetobacter baumannii (strain SDF)).